A 159-amino-acid polypeptide reads, in one-letter code: uncharacterized protein (159 aa).

This sequence to M.jannaschii MJECL20.

This is an uncharacterized protein from Methanocaldococcus jannaschii (strain ATCC 43067 / DSM 2661 / JAL-1 / JCM 10045 / NBRC 100440) (Methanococcus jannaschii).